Reading from the N-terminus, the 471-residue chain is uncharacterized protein (471 aa).

The segment at 13–57 is disordered; that stretch reads KGGATIGATPMESDSSVSALSGSSASKVSRRGRRRSHLASKSSAP. Residues 27–39 show a composition bias toward low complexity; the sequence is SSVSALSGSSASK. Basic residues predominate over residues 40–50; it reads VSRRGRRRSHL. CCHC-type zinc fingers lie at residues 397–414 and 417–434; these read YACH…ECRQ and SVCR…KCQN. The tract at residues 438–457 is gag-like cysteine motif; it reads CRNCRHRGQPSGHYMLSNAC.

The protein to corresponding ORF of B.mori (R1BM).

This is an uncharacterized protein from Drosophila melanogaster (Fruit fly).